Reading from the N-terminus, the 461-residue chain is Tubulin gamma chain (461 aa).

Residue 142–148 coordinates GTP; sequence AGGTGSG.

It belongs to the tubulin family.

The protein localises to the cytoplasm. It is found in the cytoskeleton. Its subcellular location is the microtubule organizing center. The protein resides in the spindle pole body. Its function is as follows. Tubulin is the major constituent of microtubules. The gamma chain is found at microtubule organizing centers (MTOC) such as the spindle poles or the centrosome, suggesting that it is involved in the minus-end nucleation of microtubule assembly. The chain is Tubulin gamma chain (tbg) from Neurospora crassa (strain ATCC 24698 / 74-OR23-1A / CBS 708.71 / DSM 1257 / FGSC 987).